A 439-amino-acid polypeptide reads, in one-letter code: tRNA modification GTPase MnmE (439 aa).

Positions 24, 81, and 121 each coordinate (6S)-5-formyl-5,6,7,8-tetrahydrofolate. The 146-residue stretch at 218 to 363 folds into the TrmE-type G domain; that stretch reads GFKVVIAGAP…LRRLIGDIVE (146 aa). K(+) is bound at residue N228. Residues 228 to 233, 247 to 253, and 272 to 275 contribute to the GTP site; these read NAGKSS, TEIAGTT, and DTAG. Position 232 (S232) interacts with Mg(2+). K(+)-binding residues include T247, I249, and T252. T253 contacts Mg(2+). K439 is a (6S)-5-formyl-5,6,7,8-tetrahydrofolate binding site.

The protein belongs to the TRAFAC class TrmE-Era-EngA-EngB-Septin-like GTPase superfamily. TrmE GTPase family. Homodimer. Heterotetramer of two MnmE and two MnmG subunits. K(+) serves as cofactor.

It is found in the cytoplasm. Its function is as follows. Exhibits a very high intrinsic GTPase hydrolysis rate. Involved in the addition of a carboxymethylaminomethyl (cmnm) group at the wobble position (U34) of certain tRNAs, forming tRNA-cmnm(5)s(2)U34. The chain is tRNA modification GTPase MnmE from Rhizobium johnstonii (strain DSM 114642 / LMG 32736 / 3841) (Rhizobium leguminosarum bv. viciae).